A 228-amino-acid polypeptide reads, in one-letter code: Ribosomal RNA large subunit methyltransferase E (228 aa).

S-adenosyl-L-methionine-binding residues include Gly76, Trp78, Asp99, Asp115, and Asp139. Catalysis depends on Lys179, which acts as the Proton acceptor.

It belongs to the class I-like SAM-binding methyltransferase superfamily. RNA methyltransferase RlmE family.

The protein localises to the cytoplasm. The enzyme catalyses uridine(2552) in 23S rRNA + S-adenosyl-L-methionine = 2'-O-methyluridine(2552) in 23S rRNA + S-adenosyl-L-homocysteine + H(+). Functionally, specifically methylates the uridine in position 2552 of 23S rRNA at the 2'-O position of the ribose in the fully assembled 50S ribosomal subunit. The protein is Ribosomal RNA large subunit methyltransferase E of Nitrobacter hamburgensis (strain DSM 10229 / NCIMB 13809 / X14).